Here is a 388-residue protein sequence, read N- to C-terminus: ATP phosphoribosyltransferase regulatory subunit (388 aa).

It belongs to the class-II aminoacyl-tRNA synthetase family. HisZ subfamily. As to quaternary structure, heteromultimer composed of HisG and HisZ subunits.

Its subcellular location is the cytoplasm. Its pathway is amino-acid biosynthesis; L-histidine biosynthesis; L-histidine from 5-phospho-alpha-D-ribose 1-diphosphate: step 1/9. Functionally, required for the first step of histidine biosynthesis. May allow the feedback regulation of ATP phosphoribosyltransferase activity by histidine. The sequence is that of ATP phosphoribosyltransferase regulatory subunit from Acinetobacter baumannii (strain SDF).